Reading from the N-terminus, the 323-residue chain is Glyoxylate/hydroxypyruvate reductase B (323 aa).

Active-site residues include Arg237 and Glu266. His285 acts as the Proton donor in catalysis.

This sequence belongs to the D-isomer specific 2-hydroxyacid dehydrogenase family. GhrB subfamily. Homodimer.

The protein resides in the cytoplasm. The enzyme catalyses glycolate + NADP(+) = glyoxylate + NADPH + H(+). It carries out the reaction (R)-glycerate + NAD(+) = 3-hydroxypyruvate + NADH + H(+). The catalysed reaction is (R)-glycerate + NADP(+) = 3-hydroxypyruvate + NADPH + H(+). Its function is as follows. Catalyzes the NADPH-dependent reduction of glyoxylate and hydroxypyruvate into glycolate and glycerate, respectively. In Klebsiella pneumoniae subsp. pneumoniae (strain ATCC 700721 / MGH 78578), this protein is Glyoxylate/hydroxypyruvate reductase B.